A 728-amino-acid chain; its full sequence is 1,4-alpha-glucan branching enzyme GlgB (728 aa).

The active-site Nucleophile is the D405. E458 acts as the Proton donor in catalysis.

The protein belongs to the glycosyl hydrolase 13 family. GlgB subfamily. Monomer.

The catalysed reaction is Transfers a segment of a (1-&gt;4)-alpha-D-glucan chain to a primary hydroxy group in a similar glucan chain.. It participates in glycan biosynthesis; glycogen biosynthesis. Functionally, catalyzes the formation of the alpha-1,6-glucosidic linkages in glycogen by scission of a 1,4-alpha-linked oligosaccharide from growing alpha-1,4-glucan chains and the subsequent attachment of the oligosaccharide to the alpha-1,6 position. This Shigella flexneri protein is 1,4-alpha-glucan branching enzyme GlgB.